Here is a 553-residue protein sequence, read N- to C-terminus: Dihydroxy-acid dehydratase (553 aa).

A Mg(2+)-binding site is contributed by aspartate 78. Residue cysteine 119 participates in [2Fe-2S] cluster binding. Mg(2+)-binding residues include aspartate 120 and lysine 121. Lysine 121 is modified (N6-carboxylysine). A [2Fe-2S] cluster-binding site is contributed by cysteine 191. Mg(2+) is bound at residue glutamate 442. Serine 468 (proton acceptor) is an active-site residue.

It belongs to the IlvD/Edd family. As to quaternary structure, homodimer. The cofactor is [2Fe-2S] cluster. Mg(2+) serves as cofactor.

The catalysed reaction is (2R)-2,3-dihydroxy-3-methylbutanoate = 3-methyl-2-oxobutanoate + H2O. It catalyses the reaction (2R,3R)-2,3-dihydroxy-3-methylpentanoate = (S)-3-methyl-2-oxopentanoate + H2O. Its pathway is amino-acid biosynthesis; L-isoleucine biosynthesis; L-isoleucine from 2-oxobutanoate: step 3/4. The protein operates within amino-acid biosynthesis; L-valine biosynthesis; L-valine from pyruvate: step 3/4. Functionally, functions in the biosynthesis of branched-chain amino acids. Catalyzes the dehydration of (2R,3R)-2,3-dihydroxy-3-methylpentanoate (2,3-dihydroxy-3-methylvalerate) into 2-oxo-3-methylpentanoate (2-oxo-3-methylvalerate) and of (2R)-2,3-dihydroxy-3-methylbutanoate (2,3-dihydroxyisovalerate) into 2-oxo-3-methylbutanoate (2-oxoisovalerate), the penultimate precursor to L-isoleucine and L-valine, respectively. This Carboxydothermus hydrogenoformans (strain ATCC BAA-161 / DSM 6008 / Z-2901) protein is Dihydroxy-acid dehydratase.